The following is a 556-amino-acid chain: Oxygen-dependent choline dehydrogenase (556 aa).

An FAD-binding site is contributed by 6–35 (DYIIIGAGSAGNVLAARLTEDPGVSVLLLE). His-475 serves as the catalytic Proton acceptor.

The protein belongs to the GMC oxidoreductase family. The cofactor is FAD.

The enzyme catalyses choline + A = betaine aldehyde + AH2. The catalysed reaction is betaine aldehyde + NAD(+) + H2O = glycine betaine + NADH + 2 H(+). Its pathway is amine and polyamine biosynthesis; betaine biosynthesis via choline pathway; betaine aldehyde from choline (cytochrome c reductase route): step 1/1. Its function is as follows. Involved in the biosynthesis of the osmoprotectant glycine betaine. Catalyzes the oxidation of choline to betaine aldehyde and betaine aldehyde to glycine betaine at the same rate. The chain is Oxygen-dependent choline dehydrogenase from Xanthomonas campestris pv. campestris (strain 8004).